We begin with the raw amino-acid sequence, 288 residues long: Acetylglutamate kinase (288 aa).

Substrate is bound by residues 66–67 (GG), arginine 88, and asparagine 182.

It belongs to the acetylglutamate kinase family. ArgB subfamily.

It is found in the cytoplasm. It carries out the reaction N-acetyl-L-glutamate + ATP = N-acetyl-L-glutamyl 5-phosphate + ADP. It functions in the pathway amino-acid biosynthesis; L-arginine biosynthesis; N(2)-acetyl-L-ornithine from L-glutamate: step 2/4. Functionally, catalyzes the ATP-dependent phosphorylation of N-acetyl-L-glutamate. The sequence is that of Acetylglutamate kinase from Brachyspira hyodysenteriae (strain ATCC 49526 / WA1).